The sequence spans 320 residues: Acetyl-coenzyme A carboxylase carboxyl transferase subunit alpha (320 aa).

Residues 41–295 enclose the CoA carboxyltransferase C-terminal domain; the sequence is KIEEKAQQAL…GDAIAAAFAE (255 aa).

This sequence belongs to the AccA family. In terms of assembly, acetyl-CoA carboxylase is a heterohexamer composed of biotin carboxyl carrier protein (AccB), biotin carboxylase (AccC) and two subunits each of ACCase subunit alpha (AccA) and ACCase subunit beta (AccD).

The protein localises to the cytoplasm. It carries out the reaction N(6)-carboxybiotinyl-L-lysyl-[protein] + acetyl-CoA = N(6)-biotinyl-L-lysyl-[protein] + malonyl-CoA. It participates in lipid metabolism; malonyl-CoA biosynthesis; malonyl-CoA from acetyl-CoA: step 1/1. Functionally, component of the acetyl coenzyme A carboxylase (ACC) complex. First, biotin carboxylase catalyzes the carboxylation of biotin on its carrier protein (BCCP) and then the CO(2) group is transferred by the carboxyltransferase to acetyl-CoA to form malonyl-CoA. This Rhodopseudomonas palustris (strain ATCC BAA-98 / CGA009) protein is Acetyl-coenzyme A carboxylase carboxyl transferase subunit alpha.